Reading from the N-terminus, the 801-residue chain is Potassium transporter 1 (801 aa).

The disordered stretch occupies residues 1–20 (MSSALEVEGSGSPGVEPAAT). The Cytoplasmic segment spans residues 1–57 (MSSALEVEGSGSPGVEPAATATASRLKRHDSLFGDAEKVSGGKHHGGSAVSWAVTLH). The helical transmembrane segment at 58-80 (LAFQSVGIIYGDIGTSPLYVYSS) threads the bilayer. Residues 81–94 (TFPDGIGHRDDLVG) lie on the Extracellular side of the membrane. A helical transmembrane segment spans residues 95–115 (VLSLILYTLIIIPMLKYVFIV). Residues 116–181 (LYANDNGDGG…HKLESSRAAK (66 aa)) lie on the Cytoplasmic side of the membrane. A helical membrane pass occupies residues 182–202 (MALFFLTILGTSMVMGDGTLT). At 203–219 (PAISVLSAVSGIREKAP) the chain is on the extracellular side. The chain crosses the membrane as a helical span at residues 220–240 (NLTQTQVVLISVAILFMLFSV). Topologically, residues 241–247 (QRFGTDK) are cytoplasmic. A helical membrane pass occupies residues 248-268 (VGYTFAPIISVWFLLIAGIGL). Over 269 to 298 (YNLVVHEITILKAFNPWYIVQYFRRNGKKG) the chain is Extracellular. Residues 299–319 (WVSLGGVVLCVTGTEGMFADL) traverse the membrane as a helical segment. At 320–328 (GHFNIRAVQ) the chain is on the cytoplasmic side. Residues 329–349 (ISFNCILFPSVALCYIGQAAY) form a helical membrane-spanning segment. At 350–375 (LRKFPENVSDTFYKSIPGKYRDRLNF) the chain is on the extracellular side. The chain crosses the membrane as a helical span at residues 376–398 (GPLFWPTFIVAILAAIIASQAML). Residues 399-429 (SGAFAILSKALSLGCLPRVRVIHTSKKYEGQ) lie on the Cytoplasmic side of the membrane. A helical transmembrane segment spans residues 430–450 (VYIPEVNFMMGLASIIVTIAF). Over 451 to 461 (RTTTSIGNAYG) the chain is Extracellular. A helical membrane pass occupies residues 462–482 (ICVVTTFMVTTHLMTVVMLLI). Residues 483–487 (WKKHL) lie on the Cytoplasmic side of the membrane. The chain crosses the membrane as a helical span at residues 488–508 (VFILLFYCVFGFTEVVYLSSI). Topologically, residues 509 to 511 (LSK) are extracellular. Residues 512–532 (FVDGGYLPFCFAMVLMTMMAT) traverse the membrane as a helical segment. At 533–801 (WHYVHVRRYW…LLKVGITYEI (269 aa)) the chain is on the cytoplasmic side. The interval 679-728 (DDDDEAAARPRRSTSSAVHSEEAIQAASSGRTTASSVQLQAGGEPPAAMD) is disordered. The span at 704–717 (AASSGRTTASSVQL) shows a compositional bias: polar residues.

It belongs to the HAK/KUP transporter (TC 2.A.72.3) family. In terms of tissue distribution, expressed almost exclusively in roots.

The protein resides in the cell membrane. High-affinity potassium transporter. Also transports rubidium, with the same affinity and cesium, with a lower affinity. The protein is Potassium transporter 1 (HAK1) of Oryza sativa subsp. japonica (Rice).